Here is a 471-residue protein sequence, read N- to C-terminus: Putative multidrug resistance protein MdtD (471 aa).

The Periplasmic portion of the chain corresponds to 1-11; sequence MTELPDSTRWQ. Residues 12-32 traverse the membrane as a helical segment; sequence LWIVAFGFFMQSLDTTIVNTA. Residues 33-48 lie on the Cytoplasmic side of the membrane; that stretch reads LPSMAQSLGESPLHMH. A helical transmembrane segment spans residues 49–69; that stretch reads MVIVSYVLTVAVMLPASGWLA. The Periplasmic segment spans residues 70–76; that stretch reads DKVGVRN. A helical transmembrane segment spans residues 77-97; it reads IFFTAIVLFTLGSLFCALSGT. The Cytoplasmic segment spans residues 98 to 101; it reads LNEL. Residues 102 to 124 form a helical membrane-spanning segment; the sequence is LLARALQGVGGAMMVPVGRLTVM. Residues 125–137 are Periplasmic-facing; that stretch reads KIVPREQYMAAMT. The chain crosses the membrane as a helical span at residues 138 to 158; that stretch reads FVTLPGQVGPLLGPALGGLLV. Topologically, residues 159-164 are cytoplasmic; it reads EYASWH. The chain crosses the membrane as a helical span at residues 165–185; that stretch reads WIFLINIPVGIIGAIATLLLM. Residues 186–196 lie on the Periplasmic side of the membrane; the sequence is PNYTMQTRRFD. The chain crosses the membrane as a helical span at residues 197-217; the sequence is LSGFLLLAVGMAVLTLALDGS. Residues 218-224 lie on the Cytoplasmic side of the membrane; that stretch reads KGTGLSP. A helical membrane pass occupies residues 225-245; that stretch reads LAIAGLVAVGVVALVLYLLHA. The Periplasmic segment spans residues 246 to 262; sequence RNNNRALFSLKLFRTRT. The helical transmembrane segment at 263 to 283 threads the bilayer; sequence FSLGLAGSFAGRIGSGMLPFM. The Cytoplasmic segment spans residues 284 to 285; the sequence is TP. The helical transmembrane segment at 286–306 threads the bilayer; that stretch reads VFLQIGLGFSPFHAGLMMIPM. Residues 307–341 are Periplasmic-facing; the sequence is VLGSMGMKRIVVQVVNRFGYRRVLVATTLGLSLIT. A helical transmembrane segment spans residues 342-362; the sequence is LLFMTTALLGWYYVLPFVLFL. The Cytoplasmic portion of the chain corresponds to 363 to 395; the sequence is QGMVNSTRFSSMNTLTLKDLPDNLASSGNSLLS. Residues 396-416 traverse the membrane as a helical segment; the sequence is MIMQLSMSIGVTIAGLLLGLF. Topologically, residues 417–430 are periplasmic; it reads GSQHVSVDSGTTQT. A helical transmembrane segment spans residues 431–451; the sequence is VFMYTWLSMAFIIALPAFIFA. The Cytoplasmic segment spans residues 452-471; the sequence is RVPNDTHQNVAISRRKRSAQ.

Belongs to the major facilitator superfamily. TCR/Tet family.

The protein localises to the cell inner membrane. In Shigella sonnei (strain Ss046), this protein is Putative multidrug resistance protein MdtD.